Consider the following 1396-residue polypeptide: ATP-dependent helicase/nuclease subunit A (1396 aa).

The disordered stretch occupies residues 1–25 (MNREALCHDDPIGHDRLRPDSIPRD). Residues 26–532 (PKWTDEQWQA…IDLAKNFRSR (507 aa)) enclose the UvrD-like helicase ATP-binding domain. 47-54 (AAAGAGKT) is an ATP binding site. 2 disordered regions span residues 590-649 (DADG…GQPT) and 1171-1205 (HSPE…PSPD). Residues 615–920 (HKNIAKAGES…RIMSIHKSKG (306 aa)) enclose the UvrD-like helicase C-terminal domain. A compositionally biased stretch (low complexity) spans 1181–1199 (TPPSLEIPPSLETPPSLET).

The protein belongs to the helicase family. AddA subfamily. Heterodimer of AddA and AddB/RexB. The cofactor is Mg(2+).

The catalysed reaction is Couples ATP hydrolysis with the unwinding of duplex DNA by translocating in the 3'-5' direction.. It carries out the reaction ATP + H2O = ADP + phosphate + H(+). Its function is as follows. The heterodimer acts as both an ATP-dependent DNA helicase and an ATP-dependent, dual-direction single-stranded exonuclease. Recognizes the chi site generating a DNA molecule suitable for the initiation of homologous recombination. The AddA nuclease domain is required for chi fragment generation; this subunit has the helicase and 3' -&gt; 5' nuclease activities. In Heliobacterium modesticaldum (strain ATCC 51547 / Ice1), this protein is ATP-dependent helicase/nuclease subunit A.